A 139-amino-acid chain; its full sequence is MLQPKRTKYRKQQKGRMKGLSQRGHRLSNGTFGIKSMDSSFVTARQIEAARIAATRYMKREGSIWIKIFPDKPITKKPLEVRMGKGKGAVEYWAAVVKPGRIMFEIGGVPMDVAKEALRLAAQKLPVRTKFVVARDYQE.

Residues 1-17 show a composition bias toward basic residues; the sequence is MLQPKRTKYRKQQKGRM. The tract at residues 1–25 is disordered; the sequence is MLQPKRTKYRKQQKGRMKGLSQRGH.

It belongs to the universal ribosomal protein uL16 family. As to quaternary structure, part of the 50S ribosomal subunit.

Its function is as follows. Binds 23S rRNA and is also seen to make contacts with the A and possibly P site tRNAs. The chain is Large ribosomal subunit protein uL16 from Christiangramia forsetii (strain DSM 17595 / CGMCC 1.15422 / KT0803) (Gramella forsetii).